The sequence spans 459 residues: Taurine--pyruvate aminotransferase (459 aa).

Position 287 is an N6-(pyridoxal phosphate)lysine (Lys287).

Belongs to the class-III pyridoxal-phosphate-dependent aminotransferase family. Pyridoxal 5'-phosphate is required as a cofactor.

It localises to the cytoplasm. The catalysed reaction is taurine + pyruvate = sulfoacetaldehyde + L-alanine. The protein operates within organosulfur degradation; taurine degradation via aerobic pathway; acetyl phosphate and sulfite from taurine: step 1/2. Catalyzes the degradation of taurine into alanine and sulfoacetaldehyde. This chain is Taurine--pyruvate aminotransferase, found in Rhodobacter capsulatus (strain ATCC BAA-309 / NBRC 16581 / SB1003).